A 100-amino-acid chain; its full sequence is Large ribosomal subunit protein uL23 (100 aa).

It belongs to the universal ribosomal protein uL23 family. As to quaternary structure, part of the 50S ribosomal subunit. Contacts protein L29, and trigger factor when it is bound to the ribosome.

One of the early assembly proteins it binds 23S rRNA. One of the proteins that surrounds the polypeptide exit tunnel on the outside of the ribosome. Forms the main docking site for trigger factor binding to the ribosome. The protein is Large ribosomal subunit protein uL23 of Aggregatibacter actinomycetemcomitans (Actinobacillus actinomycetemcomitans).